We begin with the raw amino-acid sequence, 101 residues long: Movement protein (101 aa).

A disordered region spans residues 1 to 22; it reads MDPQNSFLLQPRVPTAAPTSGG. Residues 30–50 traverse the membrane as a helical segment; sequence EVAILSFVGLICFYLLYLWVL. The disordered stretch occupies residues 79 to 101; it reads NPIPNTQAPPSQGNPGPFVPGTG. The span at 80–92 shows a compositional bias: polar residues; it reads PIPNTQAPPSQGN.

This sequence belongs to the mastrevirus movement protein family. As to quaternary structure, interacts with the capsid protein (CP). Part of a MP-CP-viral DNA complex.

It localises to the host membrane. In terms of biological role, involved in the viral transport within, and between cells. This Avena sativa (Oat) protein is Movement protein.